Here is a 123-residue protein sequence, read N- to C-terminus: Large ribosomal subunit protein uL14 (123 aa).

It belongs to the universal ribosomal protein uL14 family. In terms of assembly, part of the 50S ribosomal subunit. Forms a cluster with proteins L3 and L19. In the 70S ribosome, L14 and L19 interact and together make contacts with the 16S rRNA in bridges B5 and B8.

In terms of biological role, binds to 23S rRNA. Forms part of two intersubunit bridges in the 70S ribosome. In Wigglesworthia glossinidia brevipalpis, this protein is Large ribosomal subunit protein uL14.